Consider the following 371-residue polypeptide: Histidinol-phosphate aminotransferase (371 aa).

K228 is subject to N6-(pyridoxal phosphate)lysine.

Belongs to the class-II pyridoxal-phosphate-dependent aminotransferase family. Histidinol-phosphate aminotransferase subfamily. The cofactor is pyridoxal 5'-phosphate.

The enzyme catalyses L-histidinol phosphate + 2-oxoglutarate = 3-(imidazol-4-yl)-2-oxopropyl phosphate + L-glutamate. It functions in the pathway amino-acid biosynthesis; L-histidine biosynthesis; L-histidine from 5-phospho-alpha-D-ribose 1-diphosphate: step 7/9. The polypeptide is Histidinol-phosphate aminotransferase (Methanococcus maripaludis (strain C7 / ATCC BAA-1331)).